A 72-amino-acid chain; its full sequence is Large ribosomal subunit protein bL31 (72 aa).

It belongs to the bacterial ribosomal protein bL31 family. Type A subfamily. In terms of assembly, part of the 50S ribosomal subunit.

Functionally, binds the 23S rRNA. The protein is Large ribosomal subunit protein bL31 of Prosthecochloris aestuarii (strain DSM 271 / SK 413).